Reading from the N-terminus, the 315-residue chain is Phosphomutase-like protein 3 (315 aa).

The signal sequence occupies residues methionine 1–threonine 19. Catalysis depends on histidine 77, which acts as the Tele-phosphohistidine intermediate. Residues asparagine 88 and asparagine 154 are each glycosylated (N-linked (GlcNAc...) asparagine). Glutamate 173 functions as the Proton donor/acceptor in the catalytic mechanism. N-linked (GlcNAc...) asparagine glycosylation occurs at asparagine 185. Asparagine 286 carries GPI-anchor amidated asparagine lipidation. Positions aspartate 287–alanine 315 are cleaved as a propeptide — removed in mature form.

The protein belongs to the phosphoglycerate mutase family.

The protein localises to the cell membrane. The sequence is that of Phosphomutase-like protein 3 (PGA12) from Candida albicans (strain SC5314 / ATCC MYA-2876) (Yeast).